Reading from the N-terminus, the 184-residue chain is MKNLTDSFVYLGHWPSAGSFGFNTDILATNPINLSVVFGVLIFFGKGVLNDLLDNRKQRILNTIRNSEELREGAIQQLENARARLRKVETEADQFRVNGYSEIEREKLNLINSTYKTLKQLENYKNETILFEQQRTINQVRERVFQQALQGAIGTLNSCLSHELHLRTINANIGMFGTMKEITD.

The helical transmembrane segment at 27-49 (LATNPINLSVVFGVLIFFGKGVL) threads the bilayer.

This sequence belongs to the ATPase B chain family. F-type ATPases have 2 components, F(1) - the catalytic core - and F(0) - the membrane proton channel. F(1) has five subunits: alpha(3), beta(3), gamma(1), delta(1), epsilon(1). F(0) has four main subunits: a(1), b(1), b'(1) and c(10-14). The alpha and beta chains form an alternating ring which encloses part of the gamma chain. F(1) is attached to F(0) by a central stalk formed by the gamma and epsilon chains, while a peripheral stalk is formed by the delta, b and b' chains.

It localises to the plastid. The protein localises to the chloroplast thylakoid membrane. Functionally, f(1)F(0) ATP synthase produces ATP from ADP in the presence of a proton or sodium gradient. F-type ATPases consist of two structural domains, F(1) containing the extramembraneous catalytic core and F(0) containing the membrane proton channel, linked together by a central stalk and a peripheral stalk. During catalysis, ATP synthesis in the catalytic domain of F(1) is coupled via a rotary mechanism of the central stalk subunits to proton translocation. In terms of biological role, component of the F(0) channel, it forms part of the peripheral stalk, linking F(1) to F(0). This is ATP synthase subunit b, chloroplastic from Barbarea verna (Land cress).